We begin with the raw amino-acid sequence, 436 residues long: Glutamyl-tRNA reductase (436 aa).

Substrate is bound by residues 49 to 52 (TCNR), Ser-109, 114 to 116 (EGQ), and Gln-120. The Nucleophile role is filled by Cys-50. 198-203 (GAGRMS) is an NADP(+) binding site.

It belongs to the glutamyl-tRNA reductase family. As to quaternary structure, homodimer.

The enzyme catalyses (S)-4-amino-5-oxopentanoate + tRNA(Glu) + NADP(+) = L-glutamyl-tRNA(Glu) + NADPH + H(+). The protein operates within porphyrin-containing compound metabolism; protoporphyrin-IX biosynthesis; 5-aminolevulinate from L-glutamyl-tRNA(Glu): step 1/2. It functions in the pathway porphyrin-containing compound metabolism; chlorophyll biosynthesis. Catalyzes the NADPH-dependent reduction of glutamyl-tRNA(Glu) to glutamate 1-semialdehyde (GSA). The sequence is that of Glutamyl-tRNA reductase from Prochlorococcus marinus (strain MIT 9301).